The sequence spans 513 residues: MGVMDLPGGRRTYAQEMEFLERVTPTQWRVREGFVPNMRVPGVFYVNKHLETLMFDELRQHVDRGDVGGFLPAVKQLANVACLPGIVSKSIALPDVHSGYGFAIGNVAAFDMSDPNAVVSPGGVGFDINCGVRVVRTNLHERDVTDIKEKLAQSLFDHIPVGVGSQGIIPTSPAGLEAALEMGMDWSLREGYAWAEDKEHCEEYGRMLNADPNKVSARAKKRGLPQMGTLGAGNHYAEIQVVDEIFDKHAADKMGIERLGQVMVMIHSGSRGLGHQVATDALTEMERAMARDGILVNDRQLACAKISSPEGQNYLSAMSCAANYAWVNRSSMTFLCRQAFAKMFDQTPDDLDMHVVYDVSHNIAKIEEHVVDGELKTLLVHRKGSTRAFPPHHPLIPVDYQYTGQPVLIGGTMGTCSYILTGTEKGMEETFGSTCHGAGRARSRNNSRNKLDYTEVLEKLKTKGIAIRVASPKLVMEEAPESYKDVTEVVNTCHDAGISKKAVKLRPIAVVKG.

Residues Asp-127, Cys-130, His-235, His-267, and His-361 each coordinate Mn(2+). 234–238 (NHYAE) serves as a coordination point for GMP. GMP contacts are provided by residues 361–362 (HN), 410–413 (GGTM), Ser-417, 436–439 (HGAG), and Lys-512. Residue His-436 is the GMP-histidine intermediate of the active site.

This sequence belongs to the RtcB family. Catalytic component of the tRNA-splicing ligase complex. It depends on Mn(2+) as a cofactor.

The enzyme catalyses a 3'-end 3'-phospho-ribonucleotide-RNA + a 5'-end dephospho-ribonucleoside-RNA + GTP = a ribonucleotidyl-ribonucleotide-RNA + GMP + diphosphate. It carries out the reaction a 3'-end 2',3'-cyclophospho-ribonucleotide-RNA + a 5'-end dephospho-ribonucleoside-RNA + GTP + H2O = a ribonucleotidyl-ribonucleotide-RNA + GMP + diphosphate + H(+). Its function is as follows. Catalytic subunit of the tRNA-splicing ligase complex that acts by directly joining spliced tRNA halves to mature-sized tRNAs by incorporating the precursor-derived splice junction phosphate into the mature tRNA as a canonical 3',5'-phosphodiester. May act as an RNA ligase with broad substrate specificity, and may function toward other RNAs. In Micromonas commoda (strain RCC299 / NOUM17 / CCMP2709) (Picoplanktonic green alga), this protein is RNA-splicing ligase RtcB homolog.